Consider the following 663-residue polypeptide: MSSRKELANAIRALSMDAVQKAKSGHPGAPMGMADIAEVLWRDFLKHNPQNPSWADRDRFVLSNGHGSMLIYSLLHLTGYDLPMEELKNFRQLHSKTPGHPEVGYTAGVETTTGPLGQGIANAVGMAIAEKTLAAQFNRPGHDIVDHYTYAFMGDGCMMEGISHEVCSLAGTLKLGKLIAFYDDNGISIDGHVEGWFTDDTAMRFEAYGWHVIRDIDGHDAASIKRAVEEARAVTDKPSLLMCKTIIGFGSPNKAGTHDSHGAPLGDAEIALTREQLGWKYAPFEIPSEIYAQWDAKEAGQAKESAWNEKFAAYAKAYPQEAAEFTRRMKGEMPSDFDAKAKEFIAKLQANPAKIASRKASQNAIEAFGPLLPEFLGGSADLAPSNLTLWSGSKAINEDAAGNYIHYGVREFGMTAIANGISLHGGFLPYTSTFLMFVEYARNAVRMAALMKQRQVMVYTHDSIGLGEDGPTHQPVEQVASLRVTPNMSTWRPCDQVESAVAWKYGVERQDGPTALILSRQNLAQQERTEEQLANIARGGYVLKDCAGQPELIFIATGSEVELAVAAYEKLTAEGVKARVVSMPSTDAFDKQDAAYRESVLPKAVTARVAVEAGIADYWYKYVGLNGAIVGMTTFGESAPAELLFEEFGFTVDNVVAKAKELL.

Residue histidine 26 coordinates substrate. At lysine 46 the chain carries N6-acetyllysine. Thiamine diphosphate contacts are provided by residues histidine 66 and 114–116 (GPL). Aspartate 155 is a Mg(2+) binding site. Thiamine diphosphate is bound by residues glycine 156 and asparagine 185. Mg(2+)-binding residues include asparagine 185 and isoleucine 187. Positions 261, 358, and 385 each coordinate substrate. Histidine 261 is a thiamine diphosphate binding site. The active-site Proton donor is glutamate 411. Phenylalanine 437 contributes to the thiamine diphosphate binding site. Positions 461, 469, 473, and 520 each coordinate substrate.

This sequence belongs to the transketolase family. In terms of assembly, homodimer. The cofactor is Mg(2+). Ca(2+) is required as a cofactor. Mn(2+) serves as cofactor. It depends on Co(2+) as a cofactor. Requires thiamine diphosphate as cofactor.

It carries out the reaction D-sedoheptulose 7-phosphate + D-glyceraldehyde 3-phosphate = aldehydo-D-ribose 5-phosphate + D-xylulose 5-phosphate. Catalyzes the transfer of a two-carbon ketol group from a ketose donor to an aldose acceptor, via a covalent intermediate with the cofactor thiamine pyrophosphate. Thus, catalyzes the reversible transfer of a two-carbon ketol group from sedoheptulose-7-phosphate to glyceraldehyde-3-phosphate, producing xylulose-5-phosphate and ribose-5-phosphate. In Escherichia coli (strain K12), this protein is Transketolase 1 (tktA).